Reading from the N-terminus, the 63-residue chain is YLDVNQIASYLLCLGEGAVFNGRKTCQIGCRAACQQPGCGGYKECEQIPNIRLHKYRCHCISG.

In terms of assembly, monomer. Contains four disulfide bonds.

The protein resides in the secreted. Functionally, has antimicrobial activity against Gram-positive bacteria and fungi. This is Megourin-3 from Megoura viciae (Vetch aphid).